A 156-amino-acid chain; its full sequence is MKVIEGVLRLKGNEKIAVINGRFNHIITDRLVEGARDAFKRHGGNEDNLDLILVPGAFEIPFALEKALSSGKYDAVCCVGAVIRGATPHFDYISAEATKGIATVGLKYGKPVSNGVLTTDTIEQAIERAGSKVGNKGAEAMVTIIEMLDLYNEMGK.

Residues Phe23, 57–59 (AFE), and 81–83 (AVI) contribute to the 5-amino-6-(D-ribitylamino)uracil site. A (2S)-2-hydroxy-3-oxobutyl phosphate-binding site is contributed by 86–87 (AT). Residue His89 is the Proton donor of the active site. 5-amino-6-(D-ribitylamino)uracil is bound at residue Asn114. Arg128 contributes to the (2S)-2-hydroxy-3-oxobutyl phosphate binding site.

This sequence belongs to the DMRL synthase family.

The enzyme catalyses (2S)-2-hydroxy-3-oxobutyl phosphate + 5-amino-6-(D-ribitylamino)uracil = 6,7-dimethyl-8-(1-D-ribityl)lumazine + phosphate + 2 H2O + H(+). It functions in the pathway cofactor biosynthesis; riboflavin biosynthesis; riboflavin from 2-hydroxy-3-oxobutyl phosphate and 5-amino-6-(D-ribitylamino)uracil: step 1/2. In terms of biological role, catalyzes the formation of 6,7-dimethyl-8-ribityllumazine by condensation of 5-amino-6-(D-ribitylamino)uracil with 3,4-dihydroxy-2-butanone 4-phosphate. This is the penultimate step in the biosynthesis of riboflavin. The polypeptide is 6,7-dimethyl-8-ribityllumazine synthase (Aliarcobacter butzleri (strain RM4018) (Arcobacter butzleri)).